Consider the following 200-residue polypeptide: Pyrrolidone-carboxylate peptidase (200 aa).

Residues Glu78, Cys141, and His165 contribute to the active site.

Belongs to the peptidase C15 family. In terms of assembly, homotetramer.

It is found in the cytoplasm. It catalyses the reaction Release of an N-terminal pyroglutamyl group from a polypeptide, the second amino acid generally not being Pro.. Its function is as follows. Removes 5-oxoproline from various penultimate amino acid residues except L-proline. This chain is Pyrrolidone-carboxylate peptidase, found in Lactobacillus acidophilus (strain ATCC 700396 / NCK56 / N2 / NCFM).